The following is a 932-amino-acid chain: F-box protein COS111 (932 aa).

Positions 29–63 (VSAKHRPSSTGVYGHDASTVDHASRSNNNLNLTRS) are disordered. Positions 53–63 (RSNNNLNLTRS) are enriched in low complexity. One can recognise an F-box domain in the interval 146–193 (RKEISDLPDEVLRNILSNVKDDQRTLVNCLYVNKAFYNATKPTLYERP). Residues 346–358 (LSEGKSSDNGNNG) are compositionally biased toward polar residues. Disordered regions lie at residues 346–369 (LSEG…SVSS), 389–450 (TLSG…SNWF), 470–500 (ISSK…TEPF), and 863–893 (SVLP…SNDP). 2 stretches are compositionally biased toward low complexity: residues 395 to 431 (NNSS…SQID) and 438 to 447 (TSSKSTSSTS). Residues 876–890 (DDTNNGENTIAQPFS) are compositionally biased toward polar residues.

F-box protein probably involved in ubiquitin conjugation pathway. The sequence is that of F-box protein COS111 (COS111) from Candida glabrata (strain ATCC 2001 / BCRC 20586 / JCM 3761 / NBRC 0622 / NRRL Y-65 / CBS 138) (Yeast).